Consider the following 256-residue polypeptide: Protein FixA (256 aa).

This sequence belongs to the ETF beta-subunit/FixA family. In terms of assembly, heterodimer of FixA and FixB.

It functions in the pathway amine and polyamine metabolism; carnitine metabolism. Required for anaerobic carnitine reduction. May bring reductant to CaiA. This Escherichia coli O139:H28 (strain E24377A / ETEC) protein is Protein FixA.